The following is a 98-amino-acid chain: Ribonuclease kappa (98 aa).

The next 2 membrane-spanning stretches (helical) occupy residues 13 to 33 (ACGI…GIFF) and 65 to 85 (VSYN…FSFC).

The protein belongs to the RNase K family. In terms of assembly, interacts with the proton translocation complex V0 of the V-ATPase. Interacts with ATP6AP1.

The protein localises to the endomembrane system. It localises to the cytoplasmic vesicle. Its subcellular location is the clathrin-coated vesicle membrane. Functionally, endoribonuclease which preferentially cleaves ApU and ApG phosphodiester bonds. Hydrolyzes UpU bonds at a lower rate. Regulates the activity of vacuolar (H+)-ATPase (V-ATPase) which is responsible for acidifying and maintaining the pH of intracellular compartments. Required at an early stage of receptor-mediated endocytosis. This Mus musculus (Mouse) protein is Ribonuclease kappa (Rnasek).